A 265-amino-acid polypeptide reads, in one-letter code: Leucine-rich repeat-containing protein Bf66946 (265 aa).

An N-terminal signal peptide occupies residues 1 to 20 (MALRDIFLLSMAMTAVTVQA). 2 disulfides stabilise this stretch: Cys21–Cys27 and Cys25–Cys39. The LRRNT domain maps to 21–50 (CPSACKCTVSLYGEMVVACGGMGLTEIPED). LRR repeat units follow at residues 51–75 (IPHRAVYLVLKDNNITKITSYSFKG), 76–99 (LRNLQGIDLSNNKINHISSAALRH), and 100–123 (LGHLDDIDLSRNELTSVSEKLFDF). A glycan (N-linked (GlcNAc...) asparagine) is linked at Asn64. The LRRCT domain maps to 142 to 193 (NPWGCDCRMAWLAQELAGGSKTFGDRHMECATPAALAGRGLSEIPQTSFVCT). Disulfide bonds link Cys146/Cys171 and Cys148/Cys192. The helical transmembrane segment at 220 to 240 (VAVVFGCITGLVTILLLVLTA) threads the bilayer.

The protein resides in the cell membrane. Functionally, binds selectively to the Gram-positive bacteria S.aureus and S.pneumoniae. Does not adhere to the Gram-negative bacteria E.coli and S.enterica. Probably recognizes peptidoglycans expressed on the bacterial cell surface. In Branchiostoma floridae (Florida lancelet), this protein is Leucine-rich repeat-containing protein Bf66946.